The following is a 61-amino-acid chain: Photosystem II reaction center protein K (61 aa).

The propeptide occupies 1 to 24 (MPNIFSLICICLNSALQPSGFFFA). A helical membrane pass occupies residues 36–56 (IVDFMPVIPVLFFLLAFVWQA).

The protein belongs to the PsbK family. PSII is composed of 1 copy each of membrane proteins PsbA, PsbB, PsbC, PsbD, PsbE, PsbF, PsbH, PsbI, PsbJ, PsbK, PsbL, PsbM, PsbT, PsbX, PsbY, PsbZ, Psb30/Ycf12, at least 3 peripheral proteins of the oxygen-evolving complex and a large number of cofactors. It forms dimeric complexes.

It localises to the plastid. Its subcellular location is the chloroplast thylakoid membrane. Its function is as follows. One of the components of the core complex of photosystem II (PSII). PSII is a light-driven water:plastoquinone oxidoreductase that uses light energy to abstract electrons from H(2)O, generating O(2) and a proton gradient subsequently used for ATP formation. It consists of a core antenna complex that captures photons, and an electron transfer chain that converts photonic excitation into a charge separation. This is Photosystem II reaction center protein K from Nymphaea alba (White water-lily).